Consider the following 341-residue polypeptide: Uroporphyrinogen decarboxylase (341 aa).

Residues 26–30 (RQAGR), Asp75, Tyr150, Ser205, and His318 each bind substrate.

It belongs to the uroporphyrinogen decarboxylase family. In terms of assembly, homodimer.

It localises to the cytoplasm. It catalyses the reaction uroporphyrinogen III + 4 H(+) = coproporphyrinogen III + 4 CO2. It functions in the pathway porphyrin-containing compound metabolism; protoporphyrin-IX biosynthesis; coproporphyrinogen-III from 5-aminolevulinate: step 4/4. Its function is as follows. Catalyzes the decarboxylation of four acetate groups of uroporphyrinogen-III to yield coproporphyrinogen-III. The sequence is that of Uroporphyrinogen decarboxylase from Thermus thermophilus (strain ATCC BAA-163 / DSM 7039 / HB27).